A 211-amino-acid chain; its full sequence is Thymidylate kinase (211 aa).

10–17 (GGDGVGKS) is a binding site for ATP.

The protein belongs to the thymidylate kinase family.

The catalysed reaction is dTMP + ATP = dTDP + ADP. Functionally, phosphorylation of dTMP to form dTDP in both de novo and salvage pathways of dTTP synthesis. The chain is Thymidylate kinase from Clavibacter michiganensis subsp. michiganensis (strain NCPPB 382).